The primary structure comprises 215 residues: Adenylate kinase (215 aa).

Residue 10 to 15 (GAGKGT) coordinates ATP. The segment at 30 to 59 (STGDMLRSAIKSGSELGKKAKQVMDAGQLV) is NMP. Residues Thr31, Arg36, 57–59 (QLV), 85–88 (GFPR), and Gln92 each bind AMP. The tract at residues 122 to 159 (GRRVHPGSGRVYHVEHNPPKVEGKDDETGEDLVVRPDD) is LID. ATP is bound by residues Arg123 and 132–133 (VY). The segment at 128-151 (GSGRVYHVEHNPPKVEGKDDETGE) is disordered. The segment covering 133-144 (YHVEHNPPKVEG) has biased composition (basic and acidic residues). Residues Arg156 and Arg167 each coordinate AMP. The disordered stretch occupies residues 195-215 (KIDGTQPVERVSEQLGDLLRK). Residue Gln200 participates in ATP binding.

The protein belongs to the adenylate kinase family. As to quaternary structure, monomer.

Its subcellular location is the cytoplasm. The catalysed reaction is AMP + ATP = 2 ADP. It participates in purine metabolism; AMP biosynthesis via salvage pathway; AMP from ADP: step 1/1. Its function is as follows. Catalyzes the reversible transfer of the terminal phosphate group between ATP and AMP. Plays an important role in cellular energy homeostasis and in adenine nucleotide metabolism. The protein is Adenylate kinase of Idiomarina loihiensis (strain ATCC BAA-735 / DSM 15497 / L2-TR).